The following is a 117-amino-acid chain: Multidrug resistance protein EbrB (117 aa).

4 consecutive transmembrane segments (helical) span residues 3–23, 31–51, 59–79, and 81–101; these read GLLYLALAIVSEVFGSTMLKL, WPIAGVIVGFLSAFTFLSFSL, AYATWSGVGTALTAIVGFLLF, and ETISLKGVFGLTLVIAGVVVL.

Belongs to the drug/metabolite transporter (DMT) superfamily. Small multidrug resistance (SMR) (TC 2.A.7.1) family. EbrA/EbrB subfamily. In terms of assembly, the efflux pump is composed of EbrA and EbrB.

The protein localises to the cell membrane. Part of a multidrug efflux pump. Confers resistance to cationic lipophilic dyes such as ethidium bromide, acriflavine, pyronine Y and safranin O. The efflux is probably coupled to an influx of protons. The chain is Multidrug resistance protein EbrB (ebrB) from Bacillus subtilis (strain 168).